A 256-amino-acid chain; its full sequence is Large ribosomal subunit protein bL21c (256 aa).

The N-terminal 55 residues, 1 to 55, are a transit peptide targeting the chloroplast; it reads MASATLAFSCSSLCATLKLPQNLNPLLLNVPPLSKPFSGVVSPPSLSRLSLLPVA.

As to quaternary structure, component of the chloroplast large ribosomal subunit (LSU). Mature 70S chloroplast ribosomes of higher plants consist of a small (30S) and a large (50S) subunit. The 30S small subunit contains 1 molecule of ribosomal RNA (16S rRNA) and 24 different proteins. The 50S large subunit contains 3 rRNA molecules (23S, 5S and 4.5S rRNA) and 33 different proteins.

The protein localises to the plastid. It is found in the chloroplast. Its function is as follows. Component of the chloroplast ribosome (chloro-ribosome), a dedicated translation machinery responsible for the synthesis of chloroplast genome-encoded proteins, including proteins of the transcription and translation machinery and components of the photosynthetic apparatus. The chain is Large ribosomal subunit protein bL21c (RPL21) from Spinacia oleracea (Spinach).